A 406-amino-acid chain; its full sequence is Interactor protein for cytohesin exchange factors 1 (406 aa).

In terms of domain architecture, PH spans 13–112; it reads HADCQGWLYK…WLNKLGFAVT (100 aa). 3 disordered regions span residues 120–173, 253–285, and 383–406; these read DEEC…FSSL, SLNN…EDDE, and PQDP…ENSL. The span at 123–134 shows a compositional bias: acidic residues; it reads CYSESEQEDPEV. Residues 144–153 show a composition bias toward low complexity; that stretch reads ASTTSSPVAA. Arginine 164 carries the phosphoserine modification. The span at 272–285 shows a compositional bias: basic and acidic residues; the sequence is MADREEIKSSEDDE. Polar residues predominate over residues 392 to 406; sequence EVMNPTSSDCVENSL.

As to quaternary structure, interacts with guanine-nucleotide exchange factors PSCD1, PSCD2, PSCD3 and PSCD4.

It localises to the cytoplasm. It is found in the cell membrane. Functionally, enhances the promotion of guanine-nucleotide exchange by PSCD2 on ARF6 in a concentration-dependent manner. The polypeptide is Interactor protein for cytohesin exchange factors 1 (Ipcef1) (Mus musculus (Mouse)).